A 183-amino-acid chain; its full sequence is Capsid protein (183 aa).

The disordered stretch occupies residues 136–183 (NAPILSTLPETTVVRRRGRSPRRRTPSPRRRRSQSPRRRRSQSRESQC). Residues 149–176 (VRRRGRSPRRRTPSPRRRRSQSPRRRRS) are compositionally biased toward basic residues. A phosphoserine; by host mark is found at serine 155, serine 162, and serine 170. A 1; half-length repeat occupies 155-161 (SPRRRTP). Positions 155-177 (SPRRRTPSPRRRRSQSPRRRRSQ) are 3 X 8 AA repeats of S-P-R-R-R-[PR]-S-Q. The short motif at 158-175 (RRTPSPRRRRSQSPRRRR) is the Bipartite nuclear localization signal element. 2 consecutive repeat copies span residues 162 to 169 (SPRRRRSQ) and 170 to 177 (SPRRRRSQ). An RNA binding region spans residues 177–183 (QSRESQC).

This sequence belongs to the orthohepadnavirus core antigen family. As to quaternary structure, homodimerizes, then multimerizes. Interacts with cytosol exposed regions of viral L glycoprotein present in the reticulum-to-Golgi compartment. Interacts with human FLNB. Phosphorylated form interacts with host importin alpha; this interaction depends on the exposure of the NLS, which itself depends upon genome maturation and/or phosphorylation of the capsid protein. Interacts with host NUP153. Phosphorylated by host SRPK1, SRPK2, and maybe protein kinase C or GAPDH. Phosphorylation is critical for pregenomic RNA packaging. Protein kinase C phosphorylation is stimulated by HBx protein and may play a role in transport of the viral genome to the nucleus at the late step during the viral replication cycle.

Its subcellular location is the virion. It localises to the host cytoplasm. Its function is as follows. Self assembles to form an icosahedral capsid. Most capsids appear to be large particles with an icosahedral symmetry of T=4 and consist of 240 copies of capsid protein, though a fraction forms smaller T=3 particles consisting of 180 capsid proteins. Entering capsids are transported along microtubules to the nucleus. Phosphorylation of the capsid is thought to induce exposure of nuclear localization signal in the C-terminal portion of the capsid protein that allows binding to the nuclear pore complex via the importin (karyopherin-) alpha and beta. Capsids are imported in intact form through the nuclear pore into the nuclear basket, where it probably binds NUP153. Only capsids that contain the mature viral genome can release the viral DNA and capsid protein into the nucleoplasm. Immature capsids get stuck in the basket. Capsids encapsulate the pre-genomic RNA and the P protein. Pre-genomic RNA is reverse-transcribed into DNA while the capsid is still in the cytoplasm. The capsid can then either be directed to the nucleus, providing more genomes for transcription, or bud through the endoplasmic reticulum to provide new virions. This chain is Capsid protein, found in Hepatitis B virus genotype D subtype ayw (isolate Italy/CI/1992) (HBV-D).